Reading from the N-terminus, the 546-residue chain is Probable lysosomal cobalamin transporter (546 aa).

4 consecutive transmembrane segments (helical) span residues 8–28 (LAQG…FSWF), 48–68 (IIAL…IFLV), 102–122 (ILYA…YFFF), and 141–161 (YSIG…FAPL). Residue asparagine 167 is glycosylated (N-linked (GlcNAc...) asparagine). 4 consecutive transmembrane segments (helical) span residues 189-209 (TALS…MITY), 304-324 (MVFG…LFIT), 352-372 (IIMV…LLVV), and 407-427 (ALLF…VMLF). Asparagine 444, asparagine 452, and asparagine 459 each carry an N-linked (GlcNAc...) asparagine glycan. A helical transmembrane segment spans residues 495-515 (VWFFGACYYWGTWLFLVVFMT).

The protein belongs to the LIMR family. LMBRD1 subfamily.

It is found in the lysosome membrane. Functionally, probable lysosomal cobalamin transporter. Required to export cobalamin from lysosomes allowing its conversion to cofactors. The protein is Probable lysosomal cobalamin transporter of Nematostella vectensis (Starlet sea anemone).